A 511-amino-acid chain; its full sequence is Histidine ammonia-lyase (511 aa).

A cross-link (5-imidazolinone (Ala-Gly)) is located at residues 143 to 145 (ASG). A 2,3-didehydroalanine (Ser) modification is found at Ser-144.

Belongs to the PAL/histidase family. In terms of processing, contains an active site 4-methylidene-imidazol-5-one (MIO), which is formed autocatalytically by cyclization and dehydration of residues Ala-Ser-Gly.

It is found in the cytoplasm. It carries out the reaction L-histidine = trans-urocanate + NH4(+). Its pathway is amino-acid degradation; L-histidine degradation into L-glutamate; N-formimidoyl-L-glutamate from L-histidine: step 1/3. This chain is Histidine ammonia-lyase, found in Idiomarina loihiensis (strain ATCC BAA-735 / DSM 15497 / L2-TR).